The primary structure comprises 135 residues: Fatty acid-binding protein 5 (135 aa).

A2 carries the N-acetylalanine modification. K17 carries the N6-acetyllysine modification. Y22 is subject to Phosphotyrosine; by Tyr-kinases. A Nuclear localization signal motif is present at residues 24-34 (KEVGVGMALRK). N-eicosanoyl ethanolamine is bound by residues C43 and R109. Cysteines 120 and 127 form a disulfide. (9Z,12Z)-octadecadienoate is bound at residue 129-131 (RVY). Y131 lines the N-eicosanoyl ethanolamine pocket. A hexadecanoate-binding site is contributed by Y131. Phosphotyrosine is present on Y131.

The protein belongs to the calycin superfamily. Fatty-acid binding protein (FABP) family. In terms of assembly, monomer. As to expression, most abundant in lens and retina (found in the mueller cells), moderately abundant in heart and testis (found in the Sertoli cells), and present in very low amounts in lung.

The protein localises to the cytoplasm. It localises to the nucleus. Its subcellular location is the synapse. It is found in the postsynaptic density. The protein resides in the secreted. The catalysed reaction is hexadecanoate(out) = hexadecanoate(in). It carries out the reaction (9Z,12Z)-octadecadienoate(out) = (9Z,12Z)-octadecadienoate(in). The enzyme catalyses (9Z)-octadecenoate(out) = (9Z)-octadecenoate(in). Functionally, intracellular carrier for long-chain fatty acids and related active lipids, such as endocannabinoids, that regulate the metabolism and actions of the ligands they bind. In addition to the cytosolic transport, selectively delivers specific fatty acids from the cytosol to the nucleus, wherein they activate nuclear receptors. Delivers retinoic acid to the nuclear receptor peroxisome proliferator-activated receptor delta; which promotes proliferation and survival. May also serve as a synaptic carrier of endocannabinoid at central synapses and thus controls retrograde endocannabinoid signaling. Modulates inflammation by regulating PTGES induction via NF-kappa-B activation, and prostaglandin E2 (PGE2) biosynthesis during inflammation. The sequence is that of Fatty acid-binding protein 5 (FABP5) from Bos taurus (Bovine).